Consider the following 105-residue polypeptide: MKMIRAVVRPSKAEEVVDALAESGCVALTKMDVIGRGKQKGIKIDQIYYDELPKTMLMLVVEDDAAENVIELITKTAYTGSFGDGKIFVSPVDEAYTVRTRSCGL.

The protein belongs to the P(II) protein family.

Functionally, could be involved in the regulation of nitrogen fixation. In Methanococcus maripaludis (strain DSM 14266 / JCM 13030 / NBRC 101832 / S2 / LL), this protein is Nitrogen fixation nifHD region glnB-like protein 1 (glnBI).